The following is a 991-amino-acid chain: Toll-like receptor 13 (991 aa).

An N-terminal signal peptide occupies residues 1–68; the sequence is MSGLYRILVQ…GFSLPPVAET (68 aa). At 69–783 the chain is on the extracellular side; the sequence is YGFNKCTQYE…DAMCNFDLGK (715 aa). N-linked (GlcNAc...) asparagine glycosylation is found at asparagine 93, asparagine 109, and asparagine 125. LRR repeat units lie at residues 104–125, 128–149, 152–174, 175–196, 199–220, 225–246, 248–268, 271–292, 295–315, 318–338, 348–368, 372–394, 397–418, 421–442, 445–466, 469–490, 493–514, 517–538, 541–562, 565–585, 594–617, 620–641, 644–665, 672–693, and 696–716; these read YTTHLNLTHNEIQVLPPWSFTN, ALVDLRLEWNSIWKIDEGAFRG, NLTLLNLVENKIQSVNNSFEGLS, SLKTLLLSHNQITHIHKDAFTP, KLKYLSLSRNNISDFSGILEAV, CLERLDLTNNSIMYLDHSPRSL, SLTHLSFEGNKLRELNFSALS, NLTNLSASRNGNKVIQNVYLKT, QLKSLNLSGTVIKLENLSAKH, NLRAMDLSNWELRHGHLDMKT, KLETLVFQKNVTNAEGIKQLA, RLLFLDLGQNSDLIYLNDSEFNA, SLQKLNLNKCQLSFINNRTWSS, NLTSLDLSHNKFKSFPDFAFSP, HLEFLSLSRNPITELNNLAFSG, ALKELNLAACWIVTIDRYSFTQ, NLEVLDLGDNNIRTLNHGTFRP, KLQSLILSHNCLKILEPNSFSG, NLRSLDLMYNSLSYFHEHLFSG, KLLILKLGFNKITYETTRTLQ, SLKQLNLEGQRHGIQVVPSNFFQG, SLQELLLGKNPSVFLDHHQFDP, NLTKLDISGTKDGDRSLYLNAS, RLKILRLENNNLESLVPDMFSS, and SLQVFSLRFNNLKVINQSHLK. N-linked (GlcNAc...) asparagine glycans are attached at residues asparagine 152 and asparagine 167. 7 N-linked (GlcNAc...) asparagine glycosylation sites follow: asparagine 209, asparagine 233, asparagine 263, asparagine 271, asparagine 274, asparagine 300, and asparagine 310. Residues asparagine 357, asparagine 388, asparagine 413, and asparagine 421 are each glycosylated (N-linked (GlcNAc...) asparagine). Asparagine 644 and asparagine 663 each carry an N-linked (GlcNAc...) asparagine glycan. Asparagine 711 and asparagine 742 each carry an N-linked (GlcNAc...) asparagine glycan. The LRRCT domain maps to 729 to 779; sequence NKLQCTCDNLWFKNWSMNTEEVHIPFLRSYPCQQPGSQSLLIDFDDAMCNF. A helical transmembrane segment spans residues 784 to 804; it reads VYFLCSFSMVLSTMVFSWFST. At 805–991 the chain is on the cytoplasmic side; sequence KMIASLWYGL…KENTHLIVVE (187 aa). The TIR domain occupies 832-975; it reads FLYDAFVSFS…LFWARIRNAL (144 aa).

This sequence belongs to the Toll-like receptor family. Binds MYD88 via their respective TIR domains. Interacts with UNC93B1.

The protein localises to the endosome membrane. Component of innate and adaptive immunity that recognizes and binds 23S rRNA from bacteria. TLRs (Toll-like receptors) control host immune response against pathogens through recognition of molecular patterns specific to microorganisms. Acts via MYD88 and TRAF6, leading to NF-kappa-B activation, cytokine secretion and the inflammatory response. Specifically binds the 5'-CGGAAAGACC-3' sequence on bacterial 23S rRNA, a sequence also bound by MLS group antibiotics (including erythromycin). May also recognize vesicular stomatitis virus; however, these data require additional evidences. The polypeptide is Toll-like receptor 13 (Tlr13) (Mus musculus (Mouse)).